We begin with the raw amino-acid sequence, 83 residues long: Exodeoxyribonuclease 7 small subunit (83 aa).

Belongs to the XseB family. Heterooligomer composed of large and small subunits.

Its subcellular location is the cytoplasm. It carries out the reaction Exonucleolytic cleavage in either 5'- to 3'- or 3'- to 5'-direction to yield nucleoside 5'-phosphates.. Its function is as follows. Bidirectionally degrades single-stranded DNA into large acid-insoluble oligonucleotides, which are then degraded further into small acid-soluble oligonucleotides. The chain is Exodeoxyribonuclease 7 small subunit from Afipia carboxidovorans (strain ATCC 49405 / DSM 1227 / KCTC 32145 / OM5) (Oligotropha carboxidovorans).